The sequence spans 143 residues: Transcription antitermination protein NusB (143 aa).

It belongs to the NusB family.

Functionally, involved in transcription antitermination. Required for transcription of ribosomal RNA (rRNA) genes. Binds specifically to the boxA antiterminator sequence of the ribosomal RNA (rrn) operons. The chain is Transcription antitermination protein NusB from Desulforamulus reducens (strain ATCC BAA-1160 / DSM 100696 / MI-1) (Desulfotomaculum reducens).